A 320-amino-acid chain; its full sequence is Eukaryotic translation initiation factor 3 subunit G (320 aa).

The tract at residues 1–59 (MPTGDFDSKPSWADQVEEEGEDDKCVTSELLKGIPLATGDTSPEPELLPGAPLPPPKEV) is disordered. S8 and S11 each carry phosphoserine. T38 and T41 each carry phosphothreonine. Phosphoserine is present on residues S42, S189, S223, and S264. Residues 209-234 (KTGKYVPPSLRDGASRRGESMQPNRR) are disordered. The span at 221 to 234 (GASRRGESMQPNRR) shows a compositional bias: basic and acidic residues. The 79-residue stretch at 239 to 317 (ATIRVTNLSE…LILNVEWAKP (79 aa)) folds into the RRM domain.

Component of the eukaryotic translation initiation factor 3 (eIF-3) complex, which is composed of 13 subunits: EIF3A, EIF3B, EIF3C, EIF3D, EIF3E, EIF3F, EIF3G, EIF3H, EIF3I, EIF3J, EIF3K, EIF3L and EIF3M. The eIF-3 complex appears to include 3 stable modules: module A is composed of EIF3A, EIF3B, EIF3G and EIF3I; module B is composed of EIF3F, EIF3H, and EIF3M; and module C is composed of EIF3C, EIF3D, EIF3E, EIF3K and EIF3L. EIF3C of module C binds EIF3B of module A and EIF3H of module B, thereby linking the three modules. EIF3J is a labile subunit that binds to the eIF-3 complex via EIF3B. The eIF-3 complex interacts with RPS6KB1 under conditions of nutrient depletion. Mitogenic stimulation leads to binding and activation of a complex composed of MTOR and RPTOR, leading to phosphorylation and release of RPS6KB1 and binding of EIF4B to eIF-3. Interacts (via C-terminus) with AIFM1 (via N-terminus). Interacts with DHX33; the interaction is independent of RNA. Post-translationally, phosphorylated. Phosphorylation is enhanced upon serum stimulation.

The protein localises to the cytoplasm. The protein resides in the nucleus. It is found in the perinuclear region. RNA-binding component of the eukaryotic translation initiation factor 3 (eIF-3) complex, which is required for several steps in the initiation of protein synthesis. The eIF-3 complex associates with the 40S ribosome and facilitates the recruitment of eIF-1, eIF-1A, eIF-2:GTP:methionyl-tRNAi and eIF-5 to form the 43S pre-initiation complex (43S PIC). The eIF-3 complex stimulates mRNA recruitment to the 43S PIC and scanning of the mRNA for AUG recognition. The eIF-3 complex is also required for disassembly and recycling of post-termination ribosomal complexes and subsequently prevents premature joining of the 40S and 60S ribosomal subunits prior to initiation. The eIF-3 complex specifically targets and initiates translation of a subset of mRNAs involved in cell proliferation, including cell cycling, differentiation and apoptosis, and uses different modes of RNA stem-loop binding to exert either translational activation or repression. This subunit can bind 18S rRNA. Functionally, (Microbial infection) In case of FCV infection, plays a role in the ribosomal termination-reinitiation event leading to the translation of VP2. The chain is Eukaryotic translation initiation factor 3 subunit G from Homo sapiens (Human).